The following is a 1401-amino-acid chain: DNA-directed RNA polymerase subunit beta'' (1401 aa).

Zn(2+) is bound by residues Cys224, Cys294, Cys301, and Cys304.

Belongs to the RNA polymerase beta' chain family. RpoC2 subfamily. As to quaternary structure, in plastids the minimal PEP RNA polymerase catalytic core is composed of four subunits: alpha, beta, beta', and beta''. When a (nuclear-encoded) sigma factor is associated with the core the holoenzyme is formed, which can initiate transcription. It depends on Zn(2+) as a cofactor.

It is found in the plastid. It localises to the chloroplast. It catalyses the reaction RNA(n) + a ribonucleoside 5'-triphosphate = RNA(n+1) + diphosphate. Functionally, DNA-dependent RNA polymerase catalyzes the transcription of DNA into RNA using the four ribonucleoside triphosphates as substrates. In Nymphaea alba (White water-lily), this protein is DNA-directed RNA polymerase subunit beta''.